The sequence spans 410 residues: Zinc finger TRAF-type-containing protein 1 (410 aa).

Positions 1-13 (MSGAEEAGGGGPA) are enriched in gly residues. Residues 1-22 (MSGAEEAGGGGPAAGPAGSVPA) form a disordered region. The RING-type; degenerate zinc finger occupies 117 to 162 (CTVCLDLPKASVYQCTNGHLMCAGCFIHLLADARLKEEQATCPNCR). A TRAF-type zinc finger spans residues 158 to 231 (CPNCRCEISK…PWHGPFHELT (74 aa)).

Belongs to the ZFTRAF1 family. As to quaternary structure, interacts with LGALS3.

The protein resides in the cytoplasm. It localises to the perinuclear region. This Bos taurus (Bovine) protein is Zinc finger TRAF-type-containing protein 1.